We begin with the raw amino-acid sequence, 427 residues long: Flotillin-1 (427 aa).

3 positions are modified to phosphoserine: Ser-19, Ser-163, and Ser-385. A Phosphothreonine modification is found at Thr-387.

This sequence belongs to the band 7/mec-2 family. Flotillin subfamily. Heterooligomeric complex of flotillin-1 and flotillin-2 and caveolin-1 and caveolin-2. Interacts with ECPAS.

Its subcellular location is the cell membrane. It is found in the endosome. The protein resides in the membrane. The protein localises to the caveola. It localises to the melanosome. Its subcellular location is the membrane raft. Functionally, may act as a scaffolding protein within caveolar membranes, functionally participating in formation of caveolae or caveolae-like vesicles. This chain is Flotillin-1 (FLOT1), found in Homo sapiens (Human).